A 543-amino-acid polypeptide reads, in one-letter code: Chaperonin GroEL (543 aa).

ATP is bound by residues 29-32 (TLGP), 86-90 (DGTTT), glycine 413, 478-480 (NAA), and aspartate 494.

The protein belongs to the chaperonin (HSP60) family. As to quaternary structure, forms a cylinder of 14 subunits composed of two heptameric rings stacked back-to-back. Interacts with the co-chaperonin GroES.

The protein resides in the cytoplasm. It catalyses the reaction ATP + H2O + a folded polypeptide = ADP + phosphate + an unfolded polypeptide.. Functionally, together with its co-chaperonin GroES, plays an essential role in assisting protein folding. The GroEL-GroES system forms a nano-cage that allows encapsulation of the non-native substrate proteins and provides a physical environment optimized to promote and accelerate protein folding. In Lactobacillus gasseri (strain ATCC 33323 / DSM 20243 / BCRC 14619 / CIP 102991 / JCM 1131 / KCTC 3163 / NCIMB 11718 / NCTC 13722 / AM63), this protein is Chaperonin GroEL.